Consider the following 198-residue polypeptide: MTSSVHELSDNNESHAKKERPDSQTRPQVPSGRSSESIDTNSVYSEPMAHGLYPYPDPYYRSVFAQQAYLPHPYPGVQLQLMGMQQPGVPLQCDAVEEPVFVNAKQYHGILRRRQSRAKLEARNRAIKAKKPYMHESRHLHAIRRPRGCGGRFLNAKKENGDHKEEEEATSDENTSEASSSLRSEKLAMATSGPNGRS.

The tract at residues 1–47 (MTSSVHELSDNNESHAKKERPDSQTRPQVPSGRSSESIDTNSVYSEP) is disordered. Over residues 7 to 23 (ELSDNNESHAKKERPDS) the composition is skewed to basic and acidic residues. A compositionally biased stretch (polar residues) spans 24–44 (QTRPQVPSGRSSESIDTNSVY). Residues 101-124 (FVNAKQYHGILRRRQSRAKLEARN) carry the Subunit association domain (SAD) motif. Residues 131–156 (KPYMHESRHLHAIRRPRGCGGRFLNA) constitute a DNA-binding region (NFYA/HAP2-type). Residues 136-198 (ESRHLHAIRR…MATSGPNGRS (63 aa)) form a disordered region. The segment covering 156-166 (AKKENGDHKEE) has biased composition (basic and acidic residues).

This sequence belongs to the NFYA/HAP2 subunit family. As to quaternary structure, heterotrimeric transcription factor composed of three components, NF-YA, NF-YB and NF-YC. NF-YB and NF-YC must interact and dimerize for NF-YA association and DNA binding. As to expression, expressed in stems, caulines, and senescent flowers.

It is found in the nucleus. In terms of biological role, stimulates the transcription of various genes by recognizing and binding to a CCAAT motif in promoters. This chain is Nuclear transcription factor Y subunit A-4 (NFYA4), found in Arabidopsis thaliana (Mouse-ear cress).